The following is a 373-amino-acid chain: Bilirubin reductase (373 aa).

Gln92 serves as a coordination point for FMN. The active-site Proton donor is Arg168. Lys215 is an FMN binding site. Positions 344, 347, 351, and 363 each coordinate [4Fe-4S] cluster.

The protein belongs to the NADH:flavin oxidoreductase/NADH oxidase family. It depends on FMN as a cofactor. [4Fe-4S] cluster is required as a cofactor.

It catalyses the reaction urobilinogen + 4 A = (4Z,15Z)-bilirubin IXalpha + 4 AH2. It carries out the reaction urobilinogen + 2 A = (4Z,15Z)-mesobilirubin IXalpha + 2 AH2. It participates in porphyrin-containing compound metabolism; protoheme degradation. In terms of biological role, bilirubin reductase that catalyzes reduction of mesobilirubin and/or bilirubin to urobilinogen, a key step during heme degradation. Cooperates with BilS, which is probably involved in electron transfer for BilR. Urobilinogen then spontaneously degrades into urobilin, which gives urine its distinctive yellow color. The sequence is that of Bilirubin reductase from Clostridium symbiosum (strain WAL-14163).